A 240-amino-acid chain; its full sequence is Probable phosphatase Athe_0620 (240 aa).

Residues H8, H10, H16, H41, E74, H102, H132, D192, and H194 each coordinate Zn(2+).

The protein belongs to the PHP family. It depends on Zn(2+) as a cofactor.

This chain is Probable phosphatase Athe_0620, found in Caldicellulosiruptor bescii (strain ATCC BAA-1888 / DSM 6725 / KCTC 15123 / Z-1320) (Anaerocellum thermophilum).